A 223-amino-acid polypeptide reads, in one-letter code: Thylakoid lumenal 15.0 kDa protein 2, chloroplastic (223 aa).

It localises to the plastid. Its subcellular location is the chloroplast thylakoid lumen. This chain is Thylakoid lumenal 15.0 kDa protein 2, chloroplastic, found in Arabidopsis thaliana (Mouse-ear cress).